We begin with the raw amino-acid sequence, 118 residues long: Fluoride-specific ion channel FluC 2 (118 aa).

4 consecutive transmembrane segments (helical) span residues 1–21 (MIEA…RFAI), 33–53 (FPIA…YIIG), 55–75 (GVTT…FTTF), and 93–113 (TFLL…FLGM). Gly70 and Thr73 together coordinate Na(+).

It belongs to the fluoride channel Fluc/FEX (TC 1.A.43) family.

It is found in the cell membrane. It carries out the reaction fluoride(in) = fluoride(out). Na(+) is not transported, but it plays an essential structural role and its presence is essential for fluoride channel function. Functionally, fluoride-specific ion channel. Important for reducing fluoride concentration in the cell, thus reducing its toxicity. The polypeptide is Fluoride-specific ion channel FluC 2 (Bacillus cereus (strain ZK / E33L)).